We begin with the raw amino-acid sequence, 475 residues long: Ribulose bisphosphate carboxylase large chain (475 aa).

A propeptide spanning residues methionine 1–serine 2 is cleaved from the precursor. Proline 3 carries the N-acetylproline modification. The residue at position 14 (lysine 14) is an N6,N6,N6-trimethyllysine. Asparagine 123 and threonine 173 together coordinate substrate. Lysine 175 functions as the Proton acceptor in the catalytic mechanism. Lysine 177 provides a ligand contact to substrate. Mg(2+)-binding residues include lysine 201, aspartate 203, and glutamate 204. An N6-carboxylysine modification is found at lysine 201. Histidine 294 acts as the Proton acceptor in catalysis. Positions 295, 327, and 379 each coordinate substrate.

It belongs to the RuBisCO large chain family. Type I subfamily. Heterohexadecamer of 8 large chains and 8 small chains; disulfide-linked. The disulfide link is formed within the large subunit homodimers. It depends on Mg(2+) as a cofactor. Post-translationally, the disulfide bond which can form in the large chain dimeric partners within the hexadecamer appears to be associated with oxidative stress and protein turnover.

The protein localises to the plastid. Its subcellular location is the chloroplast. The catalysed reaction is 2 (2R)-3-phosphoglycerate + 2 H(+) = D-ribulose 1,5-bisphosphate + CO2 + H2O. The enzyme catalyses D-ribulose 1,5-bisphosphate + O2 = 2-phosphoglycolate + (2R)-3-phosphoglycerate + 2 H(+). In terms of biological role, ruBisCO catalyzes two reactions: the carboxylation of D-ribulose 1,5-bisphosphate, the primary event in carbon dioxide fixation, as well as the oxidative fragmentation of the pentose substrate in the photorespiration process. Both reactions occur simultaneously and in competition at the same active site. The chain is Ribulose bisphosphate carboxylase large chain from Fagopyrum esculentum subsp. ancestrale (Wild buckwheat).